Here is a 348-residue protein sequence, read N- to C-terminus: Protein RecA (348 aa).

ATP is bound at residue 66–73; that stretch reads GPESSGKT.

Belongs to the RecA family.

It is found in the cytoplasm. In terms of biological role, can catalyze the hydrolysis of ATP in the presence of single-stranded DNA, the ATP-dependent uptake of single-stranded DNA by duplex DNA, and the ATP-dependent hybridization of homologous single-stranded DNAs. It interacts with LexA causing its activation and leading to its autocatalytic cleavage. This chain is Protein RecA, found in Legionella pneumophila (strain Lens).